The sequence spans 171 residues: ATP synthase subunit b (171 aa).

The helical transmembrane segment at 3–23 (KFLFFIFVFVGISFAGDDTAT) threads the bilayer.

It belongs to the ATPase B chain family. F-type ATPases have 2 components, F(1) - the catalytic core - and F(0) - the membrane proton channel. F(1) has five subunits: alpha(3), beta(3), gamma(1), delta(1), epsilon(1). F(0) has three main subunits: a(1), b(2) and c(10-14). The alpha and beta chains form an alternating ring which encloses part of the gamma chain. F(1) is attached to F(0) by a central stalk formed by the gamma and epsilon chains, while a peripheral stalk is formed by the delta and b chains.

Its subcellular location is the cell inner membrane. Functionally, f(1)F(0) ATP synthase produces ATP from ADP in the presence of a proton or sodium gradient. F-type ATPases consist of two structural domains, F(1) containing the extramembraneous catalytic core and F(0) containing the membrane proton channel, linked together by a central stalk and a peripheral stalk. During catalysis, ATP synthesis in the catalytic domain of F(1) is coupled via a rotary mechanism of the central stalk subunits to proton translocation. In terms of biological role, component of the F(0) channel, it forms part of the peripheral stalk, linking F(1) to F(0). The chain is ATP synthase subunit b from Campylobacter hominis (strain ATCC BAA-381 / DSM 21671 / CCUG 45161 / LMG 19568 / NCTC 13146 / CH001A).